We begin with the raw amino-acid sequence, 124 residues long: MEQFEIIRESDADPYYFNKNLRLEECEIDGFTSIYKAPPPYSFVAGLSKNTSSNSFVIHKCLPPLQRNNTIRKRKRNPFLADRPYCINSEDMPLSDDRDMLKERHVKSRKLLLKEKGNRFYRRS.

It is found in the nucleus. Its subcellular location is the nucleolus. Functionally, has a role in meiosis. The polypeptide is Meiotically up-regulated gene 103 protein (mug103) (Schizosaccharomyces pombe (strain 972 / ATCC 24843) (Fission yeast)).